A 491-amino-acid polypeptide reads, in one-letter code: UDP-N-acetylmuramoyl-L-alanyl-D-glutamate--2,6-diaminopimelate ligase (491 aa).

Residue serine 30 coordinates UDP-N-acetyl-alpha-D-muramoyl-L-alanyl-D-glutamate. Glycine 108–threonine 114 provides a ligand contact to ATP. UDP-N-acetyl-alpha-D-muramoyl-L-alanyl-D-glutamate-binding positions include asparagine 149, threonine 150–threonine 151, serine 177, and arginine 185. Position 217 is an N6-carboxylysine (lysine 217). Residues arginine 383, aspartate 407 to arginine 410, glycine 457, and glutamate 461 each bind meso-2,6-diaminopimelate. The Meso-diaminopimelate recognition motif motif lies at aspartate 407–arginine 410.

This sequence belongs to the MurCDEF family. MurE subfamily. Mg(2+) is required as a cofactor. Post-translationally, carboxylation is probably crucial for Mg(2+) binding and, consequently, for the gamma-phosphate positioning of ATP.

The protein resides in the cytoplasm. The catalysed reaction is UDP-N-acetyl-alpha-D-muramoyl-L-alanyl-D-glutamate + meso-2,6-diaminopimelate + ATP = UDP-N-acetyl-alpha-D-muramoyl-L-alanyl-gamma-D-glutamyl-meso-2,6-diaminopimelate + ADP + phosphate + H(+). It functions in the pathway cell wall biogenesis; peptidoglycan biosynthesis. Its function is as follows. Catalyzes the addition of meso-diaminopimelic acid to the nucleotide precursor UDP-N-acetylmuramoyl-L-alanyl-D-glutamate (UMAG) in the biosynthesis of bacterial cell-wall peptidoglycan. In Bacillus cereus (strain ATCC 14579 / DSM 31 / CCUG 7414 / JCM 2152 / NBRC 15305 / NCIMB 9373 / NCTC 2599 / NRRL B-3711), this protein is UDP-N-acetylmuramoyl-L-alanyl-D-glutamate--2,6-diaminopimelate ligase.